We begin with the raw amino-acid sequence, 265 residues long: Non-seed lectin (265 aa).

The or 23 signal peptide spans 1-21 (MALYRTKELVSLVSIMFVLLA). Asn-59 and Asn-127 each carry an N-linked (GlcNAc...) asparagine glycan.

The protein belongs to the leguminous lectin family. Monomer. In terms of tissue distribution, most highly expressed in the epidermal layer of developing shoot tips.

The polypeptide is Non-seed lectin (Pisum sativum (Garden pea)).